The sequence spans 349 residues: Hydroxymethylglutaryl-CoA synthase (349 aa).

(3S)-3-hydroxy-3-methylglutaryl-CoA-binding residues include D30 and A31. The active-site Proton donor/acceptor is the E82. (3S)-3-hydroxy-3-methylglutaryl-CoA is bound by residues C114 and T155. Residue C114 is the Acyl-thioester intermediate of the active site. A CoA-binding site is contributed by R203. Residues T205 and H238 each coordinate (3S)-3-hydroxy-3-methylglutaryl-CoA. H238 serves as the catalytic Proton donor/acceptor. K243 contributes to the CoA binding site. Residues N270 and S300 each contribute to the (3S)-3-hydroxy-3-methylglutaryl-CoA site.

This sequence belongs to the thiolase-like superfamily. Archaeal HMG-CoA synthase family. As to quaternary structure, interacts with acetoacetyl-CoA thiolase that catalyzes the precedent step in the pathway and with a DUF35 protein. The acetoacetyl-CoA thiolase/HMG-CoA synthase complex channels the intermediate via a fused CoA-binding site, which allows for efficient coupling of the endergonic thiolase reaction with the exergonic HMGCS reaction.

The enzyme catalyses acetoacetyl-CoA + acetyl-CoA + H2O = (3S)-3-hydroxy-3-methylglutaryl-CoA + CoA + H(+). It participates in metabolic intermediate biosynthesis; (R)-mevalonate biosynthesis; (R)-mevalonate from acetyl-CoA: step 2/3. In terms of biological role, catalyzes the condensation of acetyl-CoA with acetoacetyl-CoA to form 3-hydroxy-3-methylglutaryl-CoA (HMG-CoA). Functions in the mevalonate (MVA) pathway leading to isopentenyl diphosphate (IPP), a key precursor for the biosynthesis of isoprenoid compounds that are building blocks of archaeal membrane lipids. In Methanococcus maripaludis (strain C6 / ATCC BAA-1332), this protein is Hydroxymethylglutaryl-CoA synthase.